A 1036-amino-acid polypeptide reads, in one-letter code: Beta-galactosidase (1036 aa).

Residues asparagine 97 and aspartate 197 each coordinate substrate. Aspartate 197 provides a ligand contact to Na(+). Glutamate 411, histidine 413, and glutamate 456 together coordinate Mg(2+). Substrate-binding positions include glutamate 456 and 532 to 535 (EYAH). The active-site Proton donor is glutamate 456. Glutamate 532 (nucleophile) is an active-site residue. A Mg(2+)-binding site is contributed by asparagine 592. Residues phenylalanine 596 and aspartate 599 each contribute to the Na(+) site. Substrate is bound by residues aspartate 599 and tryptophan 1006.

This sequence belongs to the glycosyl hydrolase 2 family. In terms of assembly, homotetramer. Requires Mg(2+) as cofactor. The cofactor is Na(+).

It catalyses the reaction Hydrolysis of terminal non-reducing beta-D-galactose residues in beta-D-galactosides.. This chain is Beta-galactosidase, found in Leuconostoc mesenteroides subsp. mesenteroides (strain ATCC 8293 / DSM 20343 / BCRC 11652 / CCM 1803 / JCM 6124 / NCDO 523 / NBRC 100496 / NCIMB 8023 / NCTC 12954 / NRRL B-1118 / 37Y).